The chain runs to 545 residues: CTP synthase (545 aa).

The segment at 1–265 (MTKYIFITGG…DEIVVKKLSL (265 aa)) is amidoligase domain. Ser-13 contributes to the CTP binding site. Residue Ser-13 participates in UTP binding. Residues 14–19 (SLGKGI) and Asp-71 each bind ATP. 2 residues coordinate Mg(2+): Asp-71 and Glu-139. Residues 146 to 148 (DIE), 186 to 191 (KTKPTQ), and Lys-222 contribute to the CTP site. UTP is bound by residues 186–191 (KTKPTQ) and Lys-222. The region spanning 290–541 (KIAMVGKYTE…VLAARIHHQE (252 aa)) is the Glutamine amidotransferase type-1 domain. Gly-351 lines the L-glutamine pocket. The Nucleophile; for glutamine hydrolysis role is filled by Cys-378. L-glutamine contacts are provided by residues 379-382 (LGMQ), Glu-402, and Arg-469. Residues His-514 and Glu-516 contribute to the active site.

The protein belongs to the CTP synthase family. Homotetramer.

The catalysed reaction is UTP + L-glutamine + ATP + H2O = CTP + L-glutamate + ADP + phosphate + 2 H(+). It catalyses the reaction L-glutamine + H2O = L-glutamate + NH4(+). It carries out the reaction UTP + NH4(+) + ATP = CTP + ADP + phosphate + 2 H(+). Its pathway is pyrimidine metabolism; CTP biosynthesis via de novo pathway; CTP from UDP: step 2/2. With respect to regulation, allosterically activated by GTP, when glutamine is the substrate; GTP has no effect on the reaction when ammonia is the substrate. The allosteric effector GTP functions by stabilizing the protein conformation that binds the tetrahedral intermediate(s) formed during glutamine hydrolysis. Inhibited by the product CTP, via allosteric rather than competitive inhibition. In terms of biological role, catalyzes the ATP-dependent amination of UTP to CTP with either L-glutamine or ammonia as the source of nitrogen. Regulates intracellular CTP levels through interactions with the four ribonucleotide triphosphates. The sequence is that of CTP synthase from Legionella pneumophila (strain Corby).